The chain runs to 582 residues: Formate--tetrahydrofolate ligase (582 aa).

Residue 65 to 72 participates in ATP binding; that stretch reads TPLGEGKT.

It belongs to the formate--tetrahydrofolate ligase family.

It carries out the reaction (6S)-5,6,7,8-tetrahydrofolate + formate + ATP = (6R)-10-formyltetrahydrofolate + ADP + phosphate. The protein operates within one-carbon metabolism; tetrahydrofolate interconversion. The protein is Formate--tetrahydrofolate ligase of Vibrio atlanticus (strain LGP32) (Vibrio splendidus (strain Mel32)).